The sequence spans 615 residues: RNA polymerase sigma factor RpoD (615 aa).

The disordered stretch occupies residues 166-216; sequence GYIDPDDGITPPAAEVPPPVDTKTAKADDDSEDEEAEATEDEEEAESGPDP. Residues 194–212 are compositionally biased toward acidic residues; that stretch reads DDSEDEEAEATEDEEEAES. Positions 381–451 are sigma-70 factor domain-2; that stretch reads MVEANLRLVI…TRSIADQART (71 aa). An Interaction with polymerase core subunit RpoC motif is present at residues 405–408; that stretch reads DLIQ. Residues 460–536 are sigma-70 factor domain-3; that stretch reads ETINKLNRIS…DSTMQSPIDV (77 aa). The interval 549-602 is sigma-70 factor domain-4; sequence VLSGLTAREAKVLRMRFGIDMNTDHTLEEVGKQFDVTRERIRQIEAKALRKLRH. The H-T-H motif DNA-binding region spans 575–594; sequence LEEVGKQFDVTRERIRQIEA.

Belongs to the sigma-70 factor family. RpoD/SigA subfamily. In terms of assembly, interacts transiently with the RNA polymerase catalytic core.

It is found in the cytoplasm. Functionally, sigma factors are initiation factors that promote the attachment of RNA polymerase to specific initiation sites and are then released. This sigma factor is the primary sigma factor during exponential growth. In Pseudomonas protegens (strain DSM 19095 / LMG 27888 / CFBP 6595 / CHA0), this protein is RNA polymerase sigma factor RpoD.